The primary structure comprises 116 residues: Cell cycle protein GpsB (116 aa).

Positions 32–69 (LDDVIKDYETYSALVKELREENSRLKQELSKRMQEAPN) form a coiled coil. The disordered stretch occupies residues 57–78 (KQELSKRMQEAPNSTASQVHQS). Over residues 67–78 (APNSTASQVHQS) the composition is skewed to polar residues.

The protein belongs to the GpsB family. As to quaternary structure, forms polymers through the coiled coil domains. Interacts with PBP1, MreC and EzrA.

The protein resides in the cytoplasm. Its function is as follows. Divisome component that associates with the complex late in its assembly, after the Z-ring is formed, and is dependent on DivIC and PBP2B for its recruitment to the divisome. Together with EzrA, is a key component of the system that regulates PBP1 localization during cell cycle progression. Its main role could be the removal of PBP1 from the cell pole after pole maturation is completed. Also contributes to the recruitment of PBP1 to the division complex. Not essential for septum formation. This Streptococcus gordonii (strain Challis / ATCC 35105 / BCRC 15272 / CH1 / DL1 / V288) protein is Cell cycle protein GpsB.